Consider the following 204-residue polypeptide: Probable chorismate pyruvate-lyase (204 aa).

Positions 78, 131, and 190 each coordinate substrate.

Belongs to the UbiC family.

It localises to the cytoplasm. The catalysed reaction is chorismate = 4-hydroxybenzoate + pyruvate. Its pathway is cofactor biosynthesis; ubiquinone biosynthesis. Functionally, removes the pyruvyl group from chorismate, with concomitant aromatization of the ring, to provide 4-hydroxybenzoate (4HB) for the ubiquinone pathway. In Shewanella frigidimarina (strain NCIMB 400), this protein is Probable chorismate pyruvate-lyase.